Consider the following 275-residue polypeptide: Tryptase (275 aa).

The N-terminal stretch at 1-20 (MLNLLVLALPLLVSLVHTAP) is a signal peptide. The propeptide at 21-30 (APGQALERAG) is activation peptide. The Peptidase S1 domain occupies 31-272 (IVGGKEAPGH…YLDWIHQCIP (242 aa)). A disulfide bridge links Cys-59 with Cys-75. Residues His-74 and Asp-121 each act as charge relay system in the active site. N-linked (GlcNAc...) asparagine glycosylation is present at Asn-132. Intrachain disulfides connect Cys-155–Cys-230, Cys-188–Cys-211, and Cys-220–Cys-248. Ser-224 (charge relay system) is an active-site residue. An N-linked (GlcNAc...) asparagine glycan is attached at Asn-233.

The protein belongs to the peptidase S1 family. Tryptase subfamily. In terms of assembly, homotetramer.

Its subcellular location is the secreted. The enzyme catalyses Preferential cleavage: Arg-|-Xaa, Lys-|-Xaa, but with more restricted specificity than trypsin.. Its function is as follows. Tryptase is the major neutral protease present in mast cells and is secreted upon the coupled activation-degranulation response of this cell type. The sequence is that of Tryptase (MCT7) from Sus scrofa (Pig).